Consider the following 470-residue polypeptide: ATP synthase subunit beta (470 aa).

Glycine 157–threonine 164 lines the ATP pocket.

This sequence belongs to the ATPase alpha/beta chains family. F-type ATPases have 2 components, CF(1) - the catalytic core - and CF(0) - the membrane proton channel. CF(1) has five subunits: alpha(3), beta(3), gamma(1), delta(1), epsilon(1). CF(0) has three main subunits: a(1), b(2) and c(9-12). The alpha and beta chains form an alternating ring which encloses part of the gamma chain. CF(1) is attached to CF(0) by a central stalk formed by the gamma and epsilon chains, while a peripheral stalk is formed by the delta and b chains.

The protein localises to the cell inner membrane. It carries out the reaction ATP + H2O + 4 H(+)(in) = ADP + phosphate + 5 H(+)(out). In terms of biological role, produces ATP from ADP in the presence of a proton gradient across the membrane. The catalytic sites are hosted primarily by the beta subunits. This is ATP synthase subunit beta from Citrifermentans bemidjiense (strain ATCC BAA-1014 / DSM 16622 / JCM 12645 / Bem) (Geobacter bemidjiensis).